The following is a 382-amino-acid chain: Succinate--CoA ligase [ADP-forming] subunit beta (382 aa).

Residues 9–240 enclose the ATP-grasp domain; that stretch reads KELFLRYGVK…PRDITEFEAY (232 aa). ATP is bound by residues lysine 45, 52–54, valine 94, and glutamate 99; that span reads GRG. Mg(2+)-binding residues include asparagine 193 and aspartate 207. Residues asparagine 260 and 317–319 each bind substrate; that span reads GIT.

It belongs to the succinate/malate CoA ligase beta subunit family. Heterotetramer of two alpha and two beta subunits. Requires Mg(2+) as cofactor.

It carries out the reaction succinate + ATP + CoA = succinyl-CoA + ADP + phosphate. The enzyme catalyses GTP + succinate + CoA = succinyl-CoA + GDP + phosphate. It functions in the pathway carbohydrate metabolism; tricarboxylic acid cycle; succinate from succinyl-CoA (ligase route): step 1/1. Functionally, succinyl-CoA synthetase functions in the citric acid cycle (TCA), coupling the hydrolysis of succinyl-CoA to the synthesis of either ATP or GTP and thus represents the only step of substrate-level phosphorylation in the TCA. The beta subunit provides nucleotide specificity of the enzyme and binds the substrate succinate, while the binding sites for coenzyme A and phosphate are found in the alpha subunit. In Pyrobaculum islandicum (strain DSM 4184 / JCM 9189 / GEO3), this protein is Succinate--CoA ligase [ADP-forming] subunit beta.